Consider the following 168-residue polypeptide: Cytochrome c-type biogenesis protein CcmE (168 aa).

Over 1–7 (MTRKKRR) the chain is Cytoplasmic. A helical; Signal-anchor for type II membrane protein transmembrane segment spans residues 8 to 28 (LYMLGLALLGLGTATALTLSA). At 29–168 (FEENIVFFYS…KVHATTTLKP (140 aa)) the chain is on the periplasmic side. Heme is bound by residues His-122 and Tyr-126. The tract at residues 149–168 (SIYTPADSDDKVHATTTLKP) is disordered.

It belongs to the CcmE/CycJ family.

The protein localises to the cell inner membrane. Functionally, heme chaperone required for the biogenesis of c-type cytochromes. Transiently binds heme delivered by CcmC and transfers the heme to apo-cytochromes in a process facilitated by CcmF and CcmH. The sequence is that of Cytochrome c-type biogenesis protein CcmE from Rhodospirillum centenum (strain ATCC 51521 / SW).